A 481-amino-acid polypeptide reads, in one-letter code: Guanine nucleotide exchange factor C9orf72 (481 aa).

In terms of domain architecture, uDENN C9ORF72-type spans 23-194 (SPLLAATFAY…ELLSSMKSHS (172 aa)). The 144-residue stretch at 200 to 343 (DIADTVLNDD…SELTAFWRAT (144 aa)) folds into the cDENN C9ORF72-type domain. In terms of domain architecture, dDENN C9ORF72-type spans 370–464 (VLHRDTLVKA…IKPGLHSFIF (95 aa)). The segment at 461-481 (SFIFGRPFYTSVQERDVLMTF) is required for the homodimerization of the C9orf72-SMCR8 complex.

As to quaternary structure, component of the C9orf72-SMCR8 complex, at least composed of C9orf72, SMCR8 and WDR41. The complex is formed of two protomers, each individually consisting of one molecule each of C9orf72, SMCR8 and WDR41. The protomers homodimerize via an interaction between C9orf72 (via C-terminus) and SMCR8 (via N-terminus). Within each protomer SMCR8 (via DENN domain) acts as a bridging protein between WDR41 (via C-terminus and N-terminus) and C9orf72 (via C-terminus). The C9orf72-SMCR8 complex associates with the ULK1/ATG1 kinase complex. Interacts with ULK1/ATG1 kinase complex members ULK1, ATG13 and RB1CC1. Interacts with SMCR8; the interaction is direct. Interacts with HNRNPA1, HNRNPA2B1 and UBQLN2. Interacts with small Rab GTPase RAB1A; the interaction mediates recruitment of RAB1A to the ULK1/ATG1 kinase complex. Also interacts with small Rab GTPase RAB7A. Interacts with cofilin. Interacts with GTP-binding proteins ARF1 and ARF6. Interacts with the DLG4/PSD-95. Interacts with CARM1 (via PH domain-like fold). Interacts with RAB39A and RAB39B (in GDP-bound forms); functions as GEF for RAB39A and RAB39B. As to expression, both isoforms are widely expressed, including kidney, lung, liver, heart, testis and several brain regions, such as cerebellum. Also expressed in the frontal cortex and in lymphoblasts (at protein level).

Its subcellular location is the cytoplasm. It localises to the nucleus. The protein resides in the P-body. It is found in the stress granule. The protein localises to the endosome. Its subcellular location is the lysosome. It localises to the cytoplasmic vesicle. The protein resides in the autophagosome. It is found in the autolysosome. The protein localises to the secreted. Its subcellular location is the cell projection. It localises to the axon. The protein resides in the growth cone. It is found in the perikaryon. The protein localises to the dendrite. Its subcellular location is the presynapse. It localises to the postsynapse. The protein resides in the nucleus membrane. In terms of biological role, acts as a guanine-nucleotide releasing factor (GEF) for Rab GTPases by promoting the conversion of inactive RAB-GDP to the active form RAB-GTP. Acts as a GEF for RAB39A which enables HOPS-mediated autophagosome-lysosome membrane tethering and fusion in mammalian autophagy. Component of the C9orf72-SMCR8 complex where both subunits display GEF activity and that regulates autophagy. As part of the C9orf72-SMCR8-WDR41 (CSW) complex, functions as GEF for RAB8A and RAB39B, thereby promoting autophagosome maturation. As part of the C9orf72-SMCR8 complex, also functions as GTPase activating protein (GAP) for RAB8A and RAB11A in vitro. The C9orf72-SMCR8 complex also acts as a regulator of autophagy initiation by interacting with the ULK1/ATG1 kinase complex and modulating its protein kinase activity. Promotes initiation of autophagy by regulating the RAB1A-dependent trafficking of the ULK1/ATG1 kinase complex to the phagophore which leads to autophagosome formation. Acts as a regulator of mTORC1 signaling by promoting phosphorylation of mTORC1 substrates. Plays a role in endosomal trafficking. May be involved in regulating the maturation of phagosomes to lysosomes. Promotes the lysosomal localization and lysosome-mediated degradation of CARM1 which leads to inhibition of starvation-induced lipid metabolism. Regulates actin dynamics in motor neurons by inhibiting the GTP-binding activity of ARF6, leading to ARF6 inactivation. This reduces the activity of the LIMK1 and LIMK2 kinases which are responsible for phosphorylation and inactivation of cofilin, leading to CFL1/cofilin activation. Positively regulates axon extension and axon growth cone size in spinal motor neurons. Required for SMCR8 protein expression and localization at pre- and post-synaptic compartments in the forebrain, also regulates protein abundance of RAB3A and GRIA1/GLUR1 in post-synaptic compartments in the forebrain and hippocampus. Plays a role within the hematopoietic system in restricting inflammation and the development of autoimmunity. Its function is as follows. Regulates stress granule assembly in response to cellular stress. Does not play a role in regulation of stress granule assembly in response to cellular stress. This is Guanine nucleotide exchange factor C9orf72 from Homo sapiens (Human).